Here is a 243-residue protein sequence, read N- to C-terminus: Protein IN2-1 homolog A (243 aa).

The GST N-terminal domain maps to 31–112; the sequence is GTTRLYICYF…YIDSHFEGPA (82 aa). Residues Lys70, Val84, and 96–97 contribute to the glutathione site; that span reads ES. The 124-residue stretch at 117–240 folds into the GST C-terminal domain; sequence DPEKRQFADE…YLLDLAKTHL (124 aa).

The protein belongs to the GST superfamily. HSP26 family.

This chain is Protein IN2-1 homolog A, found in Oryza sativa subsp. japonica (Rice).